A 615-amino-acid polypeptide reads, in one-letter code: MPIQVLPPQLANQIAAGEVVERPASVVKELVENSLDAGATRIDIDIERGGAKLIRIRDNGCGIKKDELALALARHATSKIASLDDLEAIISLGFRGEALASISSVSRLTLTSRTAEQQEAWQAYAEGRDMNVTVKPAAHPVGTTLEVLDLFYNTPARRKFLRTEKTEFNHIDEIIRRIALARFDVTINLSHNGKIVRQYRAVPEGGQKERRLGAICGTAFLEQALAIEWQHGDLTLRGWVADPNHTTPALAEIQYCYVNGRMMRDRLINHAIRQACEDKLGADQQPAFVLYLEIDPHQVDVNVHPAKHEVRFHQSRLVHDFIYQGVLSVLQQQLETPLPLDDEPQPAPRSIPENRVAAGRNHFAEPAAREPVAPRYTPAPASGSRPAAPWPNAQPGYQKQQGEVYRQLLQTPAPMQKPKAPEPQEPALAANSQSFGRVLTIVHSDCALLERDGNISLLSLPVAERWLRQAQLTPGEAPVCAQPLLIPLRLKVSAEEKSALEKAQSALAELGIDFQSDAQHVTIRAVPLPLRQQNLQILIPELIGYLAKQSVFEPGNIAQWIARNLMSEHAQWSMAQAITLLADVERLCPQLVKTPPGGLLQSVDLHPAIKALKDE.

The tract at residues 363-397 is disordered; that stretch reads FAEPAAREPVAPRYTPAPASGSRPAAPWPNAQPGY. Positions 364–391 are enriched in low complexity; it reads AEPAAREPVAPRYTPAPASGSRPAAPWP.

It belongs to the DNA mismatch repair MutL/HexB family.

In terms of biological role, this protein is involved in the repair of mismatches in DNA. It is required for dam-dependent methyl-directed DNA mismatch repair. May act as a 'molecular matchmaker', a protein that promotes the formation of a stable complex between two or more DNA-binding proteins in an ATP-dependent manner without itself being part of a final effector complex. The chain is DNA mismatch repair protein MutL from Escherichia coli O9:H4 (strain HS).